A 364-amino-acid chain; its full sequence is Pre-mRNA-splicing factor SLT11 (364 aa).

Residues 331 to 364 are disordered; sequence KSTDNAKNDKKKTSKKVHKDRSKKSKPRANKLTI. The segment covering 339 to 364 has biased composition (basic residues); it reads DKKKTSKKVHKDRSKKSKPRANKLTI.

Belongs to the SLT11 family. In terms of assembly, belongs to the CWC complex (or CEF1-associated complex), a spliceosome subcomplex composed of the U2, U5 and U6 snRNAs and at least BUD13, BUD31, BRR2, CDC40, CEF1, CLF1, CUS1, CWC2, CWC15, CWC21, CWC22, CWC23, CWC24, CWC25, CWC27, ECM2, HSH155, IST3, ISY1, LEA1, MSL1, NTC20, PRP8, PRP9, PRP11, PRP19, PRP21, PRP22, PRP45, PRP46, SLU7, SMB1, SMD1, SMD2, SMD3, SMX2, SMX3, SNT309, SNU114, SPP2, SYF1, SYF2, RSE1 and YJU2. Interacts with SLU7.

Its subcellular location is the nucleus. Involved in pre-mRNA splicing. Facilitates the cooperative formation of U2/U6 helix II in association with stem II in the spliceosome. Binds to RNA. This Saccharomyces cerevisiae (strain ATCC 204508 / S288c) (Baker's yeast) protein is Pre-mRNA-splicing factor SLT11 (ECM2).